A 1121-amino-acid chain; its full sequence is Linoleate 10R-lipoxygenase (1121 aa).

The tract at residues 1 to 66 (MLRRFSSTFK…NEKKGNSVSP (66 aa)) is disordered. Over residues 22–36 (TASSSSAAVANTNNN) the composition is skewed to low complexity. A compositionally biased stretch (basic and acidic residues) spans 50 to 61 (SSSDDDRNEKKG). Residue histidine 253 is the Proton acceptor of the active site. The Ca(2+) site is built by aspartate 254, serine 269, tyrosine 271, aspartate 273, and serine 275.

Belongs to the peroxidase family.

The enzyme catalyses (9Z,12Z)-octadecadienoate + O2 = (8E,10R,12Z)-10-hydroperoxyoctadeca-8,12-dienoate. Its function is as follows. Responsible for the synthesis of various fatty acid-derived oxylipins. Oxidizes linoleic acid primarily to 10R-hydroperoxy-8,12-octadecadienoic acid (10R-HPODE) and, to a lesser extent, 8R-hydroperoxylinoleic acid (8R-HPODE). Also synthesizes 10-hydroxy-octadeca-8,12-dienoic acid (10-HODE) from linoleic acid and primarily 8R-hydroxy-octadeca-9-monoenoic acid (8-HOME, also known as psiB beta) from oleic acid. 8-HOME forms part of psi factor, a mixture of oxylipins that regulates the balance between sexual and asexual spore production. Displays epoxyalcohol synthase activity. Plays a role in the synthesis of prostaglandins which may be required for pathogenicity. The polypeptide is Linoleate 10R-lipoxygenase (Aspergillus fumigatus (strain ATCC MYA-4609 / CBS 101355 / FGSC A1100 / Af293) (Neosartorya fumigata)).